The primary structure comprises 163 residues: 3-hydroxyacyl-[acyl-carrier-protein] dehydratase FabZ (163 aa).

The active site involves histidine 61.

Belongs to the thioester dehydratase family. FabZ subfamily.

It is found in the cytoplasm. The catalysed reaction is a (3R)-hydroxyacyl-[ACP] = a (2E)-enoyl-[ACP] + H2O. Its function is as follows. Involved in unsaturated fatty acids biosynthesis. Catalyzes the dehydration of short chain beta-hydroxyacyl-ACPs and long chain saturated and unsaturated beta-hydroxyacyl-ACPs. This Dinoroseobacter shibae (strain DSM 16493 / NCIMB 14021 / DFL 12) protein is 3-hydroxyacyl-[acyl-carrier-protein] dehydratase FabZ.